Here is a 517-residue protein sequence, read N- to C-terminus: Carotenoid phi-ring synthase (517 aa).

The interval 1–24 (MFARDSGRGHRHGRDRQAAVVPAP) is disordered. FAD contacts are provided by residues alanine 45, 64–65 (ER), arginine 72, tyrosine 99, aspartate 461, and methionine 472.

The protein belongs to the carotenoid/retinoid oxidoreductase family. The cofactor is FAD.

The catalysed reaction is a carotenoid beta-end derivative + 2 A = a carotenoid phi-end derivative + 2 AH2. It participates in carotenoid biosynthesis. Involved in the biosynthesis of isorenieratene, a carotenoid with aromatic end groups. Catalyzes the introduction of two additional double bonds into each ionone ring of beta-carotene to produce isorenieratene. The reaction includes an intramolecular methyl transfer from position C1 to position C2 of the ring. In Streptomyces griseus, this protein is Carotenoid phi-ring synthase.